Reading from the N-terminus, the 485-residue chain is tRNA sulfurtransferase (485 aa).

A THUMP domain is found at 61–165; that stretch reads EELIALLQRI…DDKMMLVKTR (105 aa). ATP contacts are provided by residues 183 to 184, Lys-265, Gly-287, and Gln-296; that span reads LI. Cys-344 and Cys-456 form a disulfide bridge. A Rhodanese domain is found at 404–483; the sequence is LGENEVILDI…FSNVRVFAKN (80 aa). Catalysis depends on Cys-456, which acts as the Cysteine persulfide intermediate.

The protein belongs to the ThiI family.

The protein localises to the cytoplasm. It carries out the reaction [ThiI sulfur-carrier protein]-S-sulfanyl-L-cysteine + a uridine in tRNA + 2 reduced [2Fe-2S]-[ferredoxin] + ATP + H(+) = [ThiI sulfur-carrier protein]-L-cysteine + a 4-thiouridine in tRNA + 2 oxidized [2Fe-2S]-[ferredoxin] + AMP + diphosphate. It catalyses the reaction [ThiS sulfur-carrier protein]-C-terminal Gly-Gly-AMP + S-sulfanyl-L-cysteinyl-[cysteine desulfurase] + AH2 = [ThiS sulfur-carrier protein]-C-terminal-Gly-aminoethanethioate + L-cysteinyl-[cysteine desulfurase] + A + AMP + 2 H(+). The protein operates within cofactor biosynthesis; thiamine diphosphate biosynthesis. Catalyzes the ATP-dependent transfer of a sulfur to tRNA to produce 4-thiouridine in position 8 of tRNAs, which functions as a near-UV photosensor. Also catalyzes the transfer of sulfur to the sulfur carrier protein ThiS, forming ThiS-thiocarboxylate. This is a step in the synthesis of thiazole, in the thiamine biosynthesis pathway. The sulfur is donated as persulfide by IscS. This is tRNA sulfurtransferase from Haemophilus influenzae (strain 86-028NP).